Consider the following 234-residue polypeptide: UPF0173 metal-dependent hydrolase Meso_1362 (234 aa).

It belongs to the UPF0173 family.

The sequence is that of UPF0173 metal-dependent hydrolase Meso_1362 from Chelativorans sp. (strain BNC1).